Reading from the N-terminus, the 369-residue chain is Cobalt-precorrin-5B C(1)-methyltransferase (369 aa).

This sequence belongs to the CbiD family.

It carries out the reaction Co-precorrin-5B + S-adenosyl-L-methionine = Co-precorrin-6A + S-adenosyl-L-homocysteine. The protein operates within cofactor biosynthesis; adenosylcobalamin biosynthesis; cob(II)yrinate a,c-diamide from sirohydrochlorin (anaerobic route): step 6/10. Its function is as follows. Catalyzes the methylation of C-1 in cobalt-precorrin-5B to form cobalt-precorrin-6A. The chain is Cobalt-precorrin-5B C(1)-methyltransferase from Brucella melitensis biotype 2 (strain ATCC 23457).